The chain runs to 450 residues: MNTKELWIEVKEILSRDESVSPEIYNYYISDTNLYTVSDNNCLITTKSEIAIGVFEAGLNEKIKNILKKLTGIQYNISFELEKNINKQASVISKIDTLTENNNLAYYENYTFENFVRGDSNHEAMQAALAVALDLGKKWNPLFIYGDSGLGKTHLLHAIENKVNEIYKTNNRVKYLKADEFGKIAMDILNQGHEIIEAFKTSYDIYDCLLIDDIQLLAKRNKTNELFFHIFNSYIEKNKQIVITSDKYPDDLGGFEARIISRFSYGLSIGLDSPDFETALKILEQKLKHQNNLGLFSEESLEFIALNFNSDVRKLEGAIKRLLFLAVMNKKPNEIITLADVEKAFKNAPLQNNEKITPKKIKQIVADSYNITIKAMMSKSRVSNVMQARQLAMYFCRTLLDEPFTRIGTEFGGKDHTTVMNSVKKVEAHISTNKEFKHLVNAIRRKIEGR.

The tract at residues 1–73 (MNTKELWIEV…KNILKKLTGI (73 aa)) is domain I, interacts with DnaA modulators. The domain II stretch occupies residues 73-104 (IQYNISFELEKNINKQASVISKIDTLTENNNL). The tract at residues 105 to 326 (AYYENYTFEN…GAIKRLLFLA (222 aa)) is domain III, AAA+ region. ATP is bound by residues Gly-149, Gly-151, Lys-152, and Thr-153. A domain IV, binds dsDNA region spans residues 327 to 450 (VMNKKPNEII…NAIRRKIEGR (124 aa)).

The protein belongs to the DnaA family. In terms of assembly, oligomerizes as a right-handed, spiral filament on DNA at oriC.

It localises to the cytoplasm. Functionally, plays an essential role in the initiation and regulation of chromosomal replication. ATP-DnaA binds to the origin of replication (oriC) to initiate formation of the DNA replication initiation complex once per cell cycle. Binds the DnaA box (a 9 base pair repeat at the origin) and separates the double-stranded (ds)DNA. Forms a right-handed helical filament on oriC DNA; dsDNA binds to the exterior of the filament while single-stranded (ss)DNA is stabiized in the filament's interior. The ATP-DnaA-oriC complex binds and stabilizes one strand of the AT-rich DNA unwinding element (DUE), permitting loading of DNA polymerase. After initiation quickly degrades to an ADP-DnaA complex that is not apt for DNA replication. Binds acidic phospholipids. This chain is Chromosomal replication initiator protein DnaA, found in Spiroplasma citri.